Consider the following 166-residue polypeptide: Thioredoxin, mitochondrial (166 aa).

Residues 1 to 59 constitute a mitochondrion transit peptide; it reads MAQRLLLRRFLTSIISGKPSQSRWAPVASRALQTPQYSPGYLTVTPSQARSIYTTRVCS. The Thioredoxin domain maps to 61 to 166; the sequence is TFNIQDGPDF…LEAFLKKLIG (106 aa). Residues C90 and C93 each act as nucleophile in the active site. C90 and C93 are joined by a disulfide. K152 is modified (N6-acetyllysine; alternate). K152 is modified (N6-succinyllysine; alternate).

Belongs to the thioredoxin family. As to quaternary structure, monomer.

Its subcellular location is the mitochondrion. Functionally, important for the control of mitochondrial reactive oxygen species homeostasis, apoptosis regulation and cell viability. Is involved in various redox reactions including the reduction of protein disulfide bonds, through the reversible oxidation of its active center dithiol to a disulfide. The protein is Thioredoxin, mitochondrial (TXN2) of Bos taurus (Bovine).